The following is a 189-amino-acid chain: Probable nicotinate-nucleotide adenylyltransferase (189 aa).

This sequence belongs to the NadD family.

The catalysed reaction is nicotinate beta-D-ribonucleotide + ATP + H(+) = deamido-NAD(+) + diphosphate. It participates in cofactor biosynthesis; NAD(+) biosynthesis; deamido-NAD(+) from nicotinate D-ribonucleotide: step 1/1. Its function is as follows. Catalyzes the reversible adenylation of nicotinate mononucleotide (NaMN) to nicotinic acid adenine dinucleotide (NaAD). The chain is Probable nicotinate-nucleotide adenylyltransferase from Bacillus cereus (strain AH187).